We begin with the raw amino-acid sequence, 234 residues long: MDMLLNTARAWGLRLDQRQIEQFARYSAELRAWNTRVNLTAITDEEGIVARHFLDSLRCALSWGDAPSSLIDIGSGAGFPGLPLKILRPELRVALVESVGKKAAFLRHMITVLDLRDVTVLTARAETVGRDPQHREQYDVVTARAVAELATLAEYCLPLCRVHGRVLAPKGSDIADEVARARTAIERLGGRVIDVEPVTIPGVEPRTLVVIAKVAPTLAAYPRAVGVPARRPIH.

S-adenosyl-L-methionine contacts are provided by residues Gly-74, Phe-79, 125–126, and Arg-144; that span reads AE.

Belongs to the methyltransferase superfamily. RNA methyltransferase RsmG family.

The protein localises to the cytoplasm. In terms of biological role, specifically methylates the N7 position of a guanine in 16S rRNA. The sequence is that of Ribosomal RNA small subunit methyltransferase G from Roseiflexus sp. (strain RS-1).